The chain runs to 227 residues: Protein GET1 (227 aa).

Over 1–3 (MSL) the chain is Lumenal. A helical membrane pass occupies residues 4–23 (LLTVFLIVFVTQLISWIGQN). Residues 24–107 (VLLEWAYNLY…SFSTKFNAVI (84 aa)) are Cytoplasmic-facing. Residues 72-96 (AKLRRSVDKGLAELEKLNSEIATAK) adopt a coiled-coil conformation. Residues 108–128 (WALTSGVNLVIGWWYGRKAVF) form a helical membrane-spanning segment. The Lumenal portion of the chain corresponds to 129–151 (YLPEGWMGPLTWWFSFPFAPRGS). The chain crosses the membrane as a helical span at residues 152–168 (VSVGVWSFACKRVLLVL). The Cytoplasmic portion of the chain corresponds to 169–227 (ERMVKELFFAETQAKEVPVGFSPSSSSSSTPNPMSKASSGSPSPRRRTTVTVESEDEKS). The interval 184–227 (EVPVGFSPSSSSSSTPNPMSKASSGSPSPRRRTTVTVESEDEKS) is disordered. A compositionally biased stretch (low complexity) spans 190 to 211 (SPSSSSSSTPNPMSKASSGSPS).

This sequence belongs to the WRB/GET1 family. As to quaternary structure, interacts with GET3.

It localises to the endoplasmic reticulum membrane. Its function is as follows. Required for the post-translational delivery of tail-anchored (TA) proteins to the endoplasmic reticulum. Acts as a membrane receptor for soluble GET3, which recognizes and selectively binds the transmembrane domain of TA proteins in the cytosol. This Coprinopsis cinerea (strain Okayama-7 / 130 / ATCC MYA-4618 / FGSC 9003) (Inky cap fungus) protein is Protein GET1.